Here is a 481-residue protein sequence, read N- to C-terminus: Trigger factor (481 aa).

In terms of domain architecture, PPIase FKBP-type spans 174 to 261 (GDIAVVSFKG…LKDLKEKELP (88 aa)). Residues 435-481 (VKEKTTKASQASKTTKAKKTTTKTTKATKTATKTTKATKTQNKKEKK) are disordered. Low complexity predominate over residues 456-474 (TKTTKATKTATKTTKATKT).

It belongs to the FKBP-type PPIase family. Tig subfamily.

The protein resides in the cytoplasm. The enzyme catalyses [protein]-peptidylproline (omega=180) = [protein]-peptidylproline (omega=0). In terms of biological role, involved in protein export. Acts as a chaperone by maintaining the newly synthesized protein in an open conformation. Functions as a peptidyl-prolyl cis-trans isomerase. This Prochlorococcus marinus (strain MIT 9312) protein is Trigger factor.